Here is a 199-residue protein sequence, read N- to C-terminus: MLKLKICGIKDEKNAKDLAFLNIDFFGLIFAKSPRRVSLEQARNLSAIFHEKDKKVVGVFVDENLEQILRCIKEAKLDGIQIYRTITKEEFEILKVQNVFVWQVISVENSLDLKSEIFANLVLFDAKGILKGGNGISFDWTLLGSYTKDFILAGGIGLDNVHKAVKTGAKILDLNSKLEDEKGLKDINKIKQILKELKK.

It belongs to the TrpF family.

The catalysed reaction is N-(5-phospho-beta-D-ribosyl)anthranilate = 1-(2-carboxyphenylamino)-1-deoxy-D-ribulose 5-phosphate. The protein operates within amino-acid biosynthesis; L-tryptophan biosynthesis; L-tryptophan from chorismate: step 3/5. The protein is N-(5'-phosphoribosyl)anthranilate isomerase of Campylobacter jejuni subsp. jejuni serotype O:2 (strain ATCC 700819 / NCTC 11168).